The following is a 264-amino-acid chain: Ribosomal RNA small subunit methyltransferase A (264 aa).

6 residues coordinate S-adenosyl-L-methionine: N15, I17, G42, E64, D90, and N109.

Belongs to the class I-like SAM-binding methyltransferase superfamily. rRNA adenine N(6)-methyltransferase family. RsmA subfamily.

The protein resides in the cytoplasm. It catalyses the reaction adenosine(1518)/adenosine(1519) in 16S rRNA + 4 S-adenosyl-L-methionine = N(6)-dimethyladenosine(1518)/N(6)-dimethyladenosine(1519) in 16S rRNA + 4 S-adenosyl-L-homocysteine + 4 H(+). In terms of biological role, specifically dimethylates two adjacent adenosines (A1518 and A1519) in the loop of a conserved hairpin near the 3'-end of 16S rRNA in the 30S particle. May play a critical role in biogenesis of 30S subunits. The chain is Ribosomal RNA small subunit methyltransferase A from Wolbachia pipientis subsp. Culex pipiens (strain wPip).